Consider the following 260-residue polypeptide: NAD-capped RNA hydrolase NudC (260 aa).

2 residues coordinate substrate: Lys-25 and Arg-69. Cys-98 and Cys-101 together coordinate Zn(2+). A substrate-binding site is contributed by Glu-111. Zn(2+) contacts are provided by Cys-116 and Cys-119. Tyr-124 provides a ligand contact to substrate. A Nudix hydrolase domain is found at Pro-125 to Thr-248. A divalent metal cation is bound by residues Ala-158, Glu-174, and Glu-178. The short motif at Gly-159–Asn-180 is the Nudix box element. Gln-192 to Ser-199 serves as a coordination point for substrate. Glu-219 contacts a divalent metal cation. Residue Ala-241 coordinates substrate.

It belongs to the Nudix hydrolase family. NudC subfamily. As to quaternary structure, homodimer. Requires Mg(2+) as cofactor. Mn(2+) serves as cofactor. It depends on Zn(2+) as a cofactor.

The catalysed reaction is a 5'-end NAD(+)-phospho-ribonucleoside in mRNA + H2O = a 5'-end phospho-adenosine-phospho-ribonucleoside in mRNA + beta-nicotinamide D-ribonucleotide + 2 H(+). It carries out the reaction NAD(+) + H2O = beta-nicotinamide D-ribonucleotide + AMP + 2 H(+). It catalyses the reaction NADH + H2O = reduced beta-nicotinamide D-ribonucleotide + AMP + 2 H(+). Functionally, mRNA decapping enzyme that specifically removes the nicotinamide adenine dinucleotide (NAD) cap from a subset of mRNAs by hydrolyzing the diphosphate linkage to produce nicotinamide mononucleotide (NMN) and 5' monophosphate mRNA. The NAD-cap is present at the 5'-end of some mRNAs and stabilizes RNA against 5'-processing. Has preference for mRNAs with a 5'-end purine. Catalyzes the hydrolysis of a broad range of dinucleotide pyrophosphates. In Yersinia pseudotuberculosis serotype O:1b (strain IP 31758), this protein is NAD-capped RNA hydrolase NudC.